Here is an 863-residue protein sequence, read N- to C-terminus: Penicillin-binding protein 1A (863 aa).

Residues 1–28 (MTENRDNKTSQSEKTTQKKKKKKFKAFK) are Cytoplasmic-facing. A helical; Signal-anchor for type II membrane protein transmembrane segment spans residues 29–49 (IILITFITLIVISLVTAIGIT). The Extracellular portion of the chain corresponds to 50–863 (LAIIKTSPDI…KPIIRPKKHF (814 aa)). Positions 71 to 248 (SKIYDDKGEL…PSVYYPYSRT (178 aa)) are transglycosylase. Residue Glu110 is the Proton donor; for transglycosylase activity of the active site. The interval 392–674 (ASAVLTDYHT…AAALFGKIMN (283 aa)) is transpeptidase. Ser431 functions as the Acyl-ester intermediate; for transpeptidase activity in the catalytic mechanism. The segment at 774 to 863 (DDDMYVLPDK…KPIIRPKKHF (90 aa)) is disordered. Over residues 808-836 (EDATNEASTEPSPNTDTVPEDSTNNLDPT) the composition is skewed to polar residues. The span at 837–846 (KNTEKKPSDK) shows a compositional bias: basic and acidic residues. The segment covering 847–863 (KNKKHVIKPIIRPKKHF) has biased composition (basic residues).

This sequence in the N-terminal section; belongs to the glycosyltransferase 51 family. The protein in the C-terminal section; belongs to the transpeptidase family.

It localises to the cell membrane. It carries out the reaction [GlcNAc-(1-&gt;4)-Mur2Ac(oyl-L-Ala-gamma-D-Glu-L-Lys-D-Ala-D-Ala)](n)-di-trans,octa-cis-undecaprenyl diphosphate + beta-D-GlcNAc-(1-&gt;4)-Mur2Ac(oyl-L-Ala-gamma-D-Glu-L-Lys-D-Ala-D-Ala)-di-trans,octa-cis-undecaprenyl diphosphate = [GlcNAc-(1-&gt;4)-Mur2Ac(oyl-L-Ala-gamma-D-Glu-L-Lys-D-Ala-D-Ala)](n+1)-di-trans,octa-cis-undecaprenyl diphosphate + di-trans,octa-cis-undecaprenyl diphosphate + H(+). It catalyses the reaction Preferential cleavage: (Ac)2-L-Lys-D-Ala-|-D-Ala. Also transpeptidation of peptidyl-alanyl moieties that are N-acyl substituents of D-alanine.. Its pathway is cell wall biogenesis; peptidoglycan biosynthesis. Functionally, cell wall formation. Synthesis of cross-linked peptidoglycan from the lipid intermediates. The enzyme has a penicillin-insensitive transglycosylase N-terminal domain (formation of linear glycan strands) and a penicillin-sensitive transpeptidase C-terminal domain (cross-linking of the peptide subunits). The polypeptide is Penicillin-binding protein 1A (pbpA) (Clostridium novyi (strain NT)).